Here is a 432-residue protein sequence, read N- to C-terminus: Adenylosuccinate synthetase (432 aa).

Residues 13 to 19 (GDEGKGK) and 41 to 43 (GHT) each bind GTP. The active-site Proton acceptor is Asp-14. The Mg(2+) site is built by Asp-14 and Gly-41. IMP-binding positions include 14–17 (DEGK), 39–42 (NAGH), Thr-130, Arg-144, Gln-225, Thr-240, and Arg-304. His-42 functions as the Proton donor in the catalytic mechanism. 300 to 306 (ATTGRSR) serves as a coordination point for substrate. GTP contacts are provided by residues Arg-306, 332-334 (KLD), and 415-417 (STG).

This sequence belongs to the adenylosuccinate synthetase family. In terms of assembly, homodimer. The cofactor is Mg(2+).

The protein localises to the cytoplasm. The enzyme catalyses IMP + L-aspartate + GTP = N(6)-(1,2-dicarboxyethyl)-AMP + GDP + phosphate + 2 H(+). Its pathway is purine metabolism; AMP biosynthesis via de novo pathway; AMP from IMP: step 1/2. In terms of biological role, plays an important role in the de novo pathway of purine nucleotide biosynthesis. Catalyzes the first committed step in the biosynthesis of AMP from IMP. In Proteus mirabilis (strain HI4320), this protein is Adenylosuccinate synthetase.